Consider the following 122-residue polypeptide: Large ribosomal subunit protein uL14 (122 aa).

The protein belongs to the universal ribosomal protein uL14 family. Part of the 50S ribosomal subunit. Forms a cluster with proteins L3 and L19. In the 70S ribosome, L14 and L19 interact and together make contacts with the 16S rRNA in bridges B5 and B8.

Functionally, binds to 23S rRNA. Forms part of two intersubunit bridges in the 70S ribosome. This chain is Large ribosomal subunit protein uL14, found in Bordetella parapertussis (strain 12822 / ATCC BAA-587 / NCTC 13253).